Here is a 324-residue protein sequence, read N- to C-terminus: Granaticin polyketide synthase bifunctional cyclase/dehydratase (324 aa).

Positions 1–21 (MVQPAATPVSLPSPTVHRSEH) are disordered.

It participates in antibiotic biosynthesis; granaticin biosynthesis. Its function is as follows. Is needed for correct cyclization of the oligoketide leading to isochromanequinone formation. This chain is Granaticin polyketide synthase bifunctional cyclase/dehydratase (gra-orf4), found in Streptomyces violaceoruber.